The primary structure comprises 233 residues: Membrane steroid-binding protein 2 (233 aa).

Residues 23 to 43 (AFFTVLALAFAVYQVVSGFFV) traverse the membrane as a helical segment. One can recognise a Cytochrome b5 heme-binding domain in the interval 70 to 167 (EITEEELKLY…SKYVKVGTIQ (98 aa)). Positions 70–167 (EITEEELKLY…SKYVKVGTIQ (98 aa)) are steroid-binding. 2 stretches are compositionally biased toward basic and acidic residues: residues 169-181 (KDGE…EPSE) and 202-224 (THDE…KDVA). Residues 169–233 (KDGEGKESSE…ATDDDDAAKE (65 aa)) are disordered. The residue at position 225 (Thr-225) is a Phosphothreonine.

This sequence belongs to the cytochrome b5 family. MAPR subfamily.

The protein localises to the cell membrane. The polypeptide is Membrane steroid-binding protein 2 (MSBP2) (Arabidopsis thaliana (Mouse-ear cress)).